The sequence spans 1464 residues: DNA-directed RNA polymerase subunit beta' (1464 aa).

3 residues coordinate Mg(2+): aspartate 541, aspartate 543, and aspartate 545. 4 residues coordinate Zn(2+): cysteine 1022, cysteine 1098, cysteine 1105, and cysteine 1108. The disordered stretch occupies residues 1435-1464 (LEDEQQQIIEVDDSDISVEDEENDFYENED).

It belongs to the RNA polymerase beta' chain family. In terms of assembly, the RNAP catalytic core consists of 2 alpha, 1 beta, 1 beta' and 1 omega subunit. When a sigma factor is associated with the core the holoenzyme is formed, which can initiate transcription. The cofactor is Mg(2+). It depends on Zn(2+) as a cofactor.

It carries out the reaction RNA(n) + a ribonucleoside 5'-triphosphate = RNA(n+1) + diphosphate. Functionally, DNA-dependent RNA polymerase catalyzes the transcription of DNA into RNA using the four ribonucleoside triphosphates as substrates. The chain is DNA-directed RNA polymerase subunit beta' from Metamycoplasma arthritidis (strain 158L3-1) (Mycoplasma arthritidis).